The sequence spans 316 residues: 2,3-dihydroxyphenylpropionate/2,3-dihydroxicinnamic acid 1,2-dioxygenase (316 aa).

H118 (proton donor) is an active-site residue. The active-site Proton acceptor is H182.

It belongs to the LigB/MhpB extradiol dioxygenase family. Homotetramer. Requires Fe(2+) as cofactor.

It catalyses the reaction 3-(2,3-dihydroxyphenyl)propanoate + O2 = (2Z,4E)-2-hydroxy-6-oxonona-2,4-dienedioate + H(+). The enzyme catalyses (2E)-3-(2,3-dihydroxyphenyl)prop-2-enoate + O2 = (2Z,4E,7E)-2-hydroxy-6-oxonona-2,4,7-trienedioate + H(+). It participates in aromatic compound metabolism; 3-phenylpropanoate degradation. Catalyzes the non-heme iron(II)-dependent oxidative cleavage of 2,3-dihydroxyphenylpropionic acid and 2,3-dihydroxicinnamic acid into 2-hydroxy-6-ketononadienedioate and 2-hydroxy-6-ketononatrienedioate, respectively. This Mycolicibacterium vanbaalenii (strain DSM 7251 / JCM 13017 / BCRC 16820 / KCTC 9966 / NRRL B-24157 / PYR-1) (Mycobacterium vanbaalenii) protein is 2,3-dihydroxyphenylpropionate/2,3-dihydroxicinnamic acid 1,2-dioxygenase.